The following is a 329-amino-acid chain: GTPase Obg (329 aa).

Residues 1-159 (MQFIDQARIS…WPLQLELKLL (159 aa)) enclose the Obg domain. One can recognise an OBG-type G domain in the interval 160-328 (AEVGIIGLPN…MLDRVWSELG (169 aa)). Residues 166 to 173 (GLPNAGKS), 191 to 195 (FTTLI), 213 to 216 (DIPG), 280 to 283 (NKQE), and 309 to 311 (SAA) contribute to the ATP site. Positions 173 and 193 each coordinate Mg(2+).

Belongs to the TRAFAC class OBG-HflX-like GTPase superfamily. OBG GTPase family. Monomer. Requires Mg(2+) as cofactor.

The protein localises to the cytoplasm. Functionally, an essential GTPase which binds GTP, GDP and possibly (p)ppGpp with moderate affinity, with high nucleotide exchange rates and a fairly low GTP hydrolysis rate. Plays a role in control of the cell cycle, stress response, ribosome biogenesis and in those bacteria that undergo differentiation, in morphogenesis control. This Synechococcus sp. (strain CC9311) protein is GTPase Obg.